The primary structure comprises 141 residues: Large ribosomal subunit protein uL16 (141 aa).

The protein belongs to the universal ribosomal protein uL16 family. In terms of assembly, part of the 50S ribosomal subunit.

Its function is as follows. Binds 23S rRNA and is also seen to make contacts with the A and possibly P site tRNAs. This chain is Large ribosomal subunit protein uL16, found in Rhodospirillum centenum (strain ATCC 51521 / SW).